A 147-amino-acid polypeptide reads, in one-letter code: Endoribonuclease YbeY (147 aa).

H111, H115, and D121 together coordinate Zn(2+).

Belongs to the endoribonuclease YbeY family. The cofactor is Zn(2+).

The protein localises to the cytoplasm. Functionally, single strand-specific metallo-endoribonuclease involved in late-stage 70S ribosome quality control and in maturation of the 3' terminus of the 16S rRNA. This is Endoribonuclease YbeY from Amoebophilus asiaticus (strain 5a2).